The sequence spans 1377 residues: MAQTHSFNGRKRVRKFFGKIPEVAEMPNLIEVQKASYDQFLMVEEPSGGRPDEGLQAVFKSVFPIQDFSGASMLEFVRYEFDPPKFDVDECRQRDLTYSAPLKVTLRLIVFDIDEDTGAKSIKDIKEQDVYMGDMPLMTDNGTFIVNGTERVIVSQMHRSPGVFFDHDKGKTHSSGKLLFAARVIPYRGSWLDIEFDSKDIVYARIDRRRKLPATTLLMALGMDGEEILSTFYKTVTYTRDGDNWRIPYSAERFKGMKIISDLVDADTGEVVLEAGKKLTARAAKQLAEKGLKAIKATEDDLFGSYLAEDVVNYATGEIYLEAGDEIDEKVLKTLIDTGETEINVLDIDHVNIGAYIRNTLAVDKNESRQEALFDIYRVMRPGEPPTMDSAEAMFHSLFFDSERYDLSAVGRVKMNMRLDLDAEDTVRVLRKEDILAVVKMLVELRDGRGEIDDIDNLGNRRVRSVGELMENQYRVGLLRMERAIKERMSSIEIDTVMPQDLINAKPAAAAVREFFGSSQLSQFMDQTNPLSEITHKRRLSALGPGGLTRERAGFEVRDVHPTHYGRICPIETPEGPNIGLINSLATFARVNKYGFIESPYRKVVDGKVTNDVVYLSAMEEAKHSVAQANVELDEQGGFVDEFVICRHAGEVMMAPRENVDLMDVSPKQLVSVAAALIPFLENDDANRALMGSNMQRQAVPLVRAEAPFVGTGMEPIVARDSGAAIAARRGGIVDQVDATRIVIRATEELDPSKSGVDIYRLQKFQRSNQSTCINQRPLVRVGDRIHKGDIIADGPSTDLGDLALGRNVLVAFMPWNGYNYEDSILLSEKIVSDDVFTSIHIEEFEVAARDTKLGPEEITRDIPNVSEEALKNLDEAGIVYIGAEVHPGDILVGKITPKGESPMTPEEKLLRAIFGEKASDVRDTSMRMPPGTYGTVVEVRVFNRHGVEKDERAMAIEREEIERLAKDRDDEQAILDRNVYGRLADMIDGKVAAAGPKGFKKGTTITRELMTEYPRSQWWQFAVEDEKLQGELEALRSQYDDSKKLLEARFMDKVEKVQRGDEMPPGVMKMVKVFVAVKRKIQPGDKMAGRHGNKGVVSRILPVEDMPFLEDGTHADIVLNPLGVPSRMNVGQILETHLGWACAGMGKKIGELLDVYRKTANIEPLRQTLEHIYPDNDRNEPVRSYDDDAILMLANQVKRGVSIATPVFDGAVEADINAMLTDAGLATSGQSTLYDGRTGEPFDRQVTMGYIYMLKLHHLVDDKIHARSIGPYSLVTQQPLGGKAQFGGQRFGEMEVWALEAYGAAYTLQEMLTVKSDDVAGRTKVYEAIVRGDDTFEAGIPESFNVLVKEMRSLGLNVELDDTREAEQPALPDAAE.

Belongs to the RNA polymerase beta chain family. As to quaternary structure, the RNAP catalytic core consists of 2 alpha, 1 beta, 1 beta' and 1 omega subunit. When a sigma factor is associated with the core the holoenzyme is formed, which can initiate transcription.

It carries out the reaction RNA(n) + a ribonucleoside 5'-triphosphate = RNA(n+1) + diphosphate. Functionally, DNA-dependent RNA polymerase catalyzes the transcription of DNA into RNA using the four ribonucleoside triphosphates as substrates. The sequence is that of DNA-directed RNA polymerase subunit beta from Brucella abortus (strain S19).